We begin with the raw amino-acid sequence, 899 residues long: Protein translocase subunit SecA (899 aa).

ATP is bound by residues Gln87, 105–109, and Asp512; that span reads GEGKT. Disordered regions lie at residues 573-592 and 861-899; these read RRID…PGSS and ITVN…CCGK. Positions 885, 887, 896, and 897 each coordinate Zn(2+).

This sequence belongs to the SecA family. Monomer and homodimer. Part of the essential Sec protein translocation apparatus which comprises SecA, SecYEG and auxiliary proteins SecDF-YajC and YidC. The cofactor is Zn(2+).

It is found in the cell inner membrane. The protein resides in the cytoplasm. It catalyses the reaction ATP + H2O + cellular proteinSide 1 = ADP + phosphate + cellular proteinSide 2.. Part of the Sec protein translocase complex. Interacts with the SecYEG preprotein conducting channel. Has a central role in coupling the hydrolysis of ATP to the transfer of proteins into and across the cell membrane, serving as an ATP-driven molecular motor driving the stepwise translocation of polypeptide chains across the membrane. This Trichlorobacter lovleyi (strain ATCC BAA-1151 / DSM 17278 / SZ) (Geobacter lovleyi) protein is Protein translocase subunit SecA.